The chain runs to 104 residues: Glycine-rich protein (104 aa).

The N-terminal stretch at 1 to 18 (MKSMIAAILFALVATSLA) is a signal peptide.

Belongs to the non-disulfide-bridged peptide (NDBP) superfamily. As to expression, expressed by the venom gland.

The protein resides in the secreted. The sequence is that of Glycine-rich protein from Lychas mucronatus (Chinese swimming scorpion).